The sequence spans 525 residues: Lymphocyte activation gene 3 protein (525 aa).

Residues 1–22 (MWEAQFLGLLFLQPLWVAPVKP) form the signal peptide. Residues 23-450 (LQPGAEVPVV…APGALPAGHL (428 aa)) are Extracellular-facing. One can recognise an Ig-like V-type domain in the interval 37–167 (GAPAQLPCSP…LSCRLRLRLG (131 aa)). The tract at residues 37-252 (GAPAQLPCSP…LTYRDGFNVS (216 aa)) is interaction with FGL1. The cysteines at positions 44 and 160 are disulfide-linked. Residues 62–97 (TWQHQPDSGPPAAAPGHPLAPGPHPAAPSSWGPRPR) are disordered. Pro residues predominate over residues 69–87 (SGPPAAAPGHPLAPGPHPA). An Ig-like C2-type 1 domain is found at 168 to 252 (QASMTASPPG…LTYRDGFNVS (85 aa)). Asn188 carries an N-linked (GlcNAc...) asparagine glycan. A disulfide bond links Cys189 and Cys241. Residues Asn250 and Asn256 are each glycosylated (N-linked (GlcNAc...) asparagine). Ig-like C2-type domains are found at residues 265-343 (PTPL…QQLN) and 348-419 (LAII…QGER). A disulfide bridge links Cys282 with Cys333. N-linked (GlcNAc...) asparagine glycosylation occurs at Asn343. Cys369 and Cys412 form a disulfide bridge. Positions 429 to 450 (ELSSPGAQRSGRAPGALPAGHL) are connecting peptide. A helical transmembrane segment spans residues 451 to 471 (LLFLILGVLSLLLLVTGAFGF). The Cytoplasmic portion of the chain corresponds to 472-525 (HLWRRQWRPRRFSALEQGIHPPQAQSKIEELEQEPEPEPEPEPEPEPEPEPEQL). The disordered stretch occupies residues 487-525 (EQGIHPPQAQSKIEELEQEPEPEPEPEPEPEPEPEPEQL). The KIEELE motif motif lies at 498-503 (KIEELE). The 12 X 2 AA tandem repeats of E-X stretch occupies residues 501-524 (ELEQEPEPEPEPEPEPEPEPEPEQ). Residues 502–525 (LEQEPEPEPEPEPEPEPEPEPEQL) are compositionally biased toward acidic residues.

This sequence belongs to the LAG3 family. In terms of assembly, interacts with MHC class II (MHC-II); selectively recognizes stable complexes of peptide and MHC-II. Interacts with FGL1 (via the Fibrinogen C-terminal domain). Post-translationally, proteolytically cleaved by ADAM10 and ADAM17 within the connecting peptide region, leading to release of Secreted lymphocyte activation gene 3 protein (sLAG-3). ADAM10 mediates constitutive cleavage, but cleavage increases following T-cell activation, whereas shedding by ADAM17 is induced by TCR signaling in a PRKCQ-dependent manner. As to expression, primarily expressed in activated T-cells and a subset of natural killer (NK) cells.

Its subcellular location is the cell membrane. The protein localises to the secreted. Its function is as follows. Lymphocyte activation gene 3 protein: Inhibitory receptor on antigen activated T-cells. Delivers inhibitory signals upon binding to ligands, such as FGL1. FGL1 constitutes a major ligand of LAG3 and is responsible for LAG3 T-cell inhibitory function. Following TCR engagement, LAG3 associates with CD3-TCR in the immunological synapse and directly inhibits T-cell activation. May inhibit antigen-specific T-cell activation in synergy with PDCD1/PD-1, possibly by acting as a coreceptor for PDCD1/PD-1. Negatively regulates the proliferation, activation, effector function and homeostasis of both CD8(+) and CD4(+) T-cells. Also mediates immune tolerance: constitutively expressed on a subset of regulatory T-cells (Tregs) and contributes to their suppressive function. Also acts as a negative regulator of plasmacytoid dendritic cell (pDCs) activation. Binds MHC class II (MHC-II); the precise role of MHC-II-binding is however unclear. Functionally, may function as a ligand for MHC class II (MHC-II) on antigen-presenting cells (APC), promoting APC activation/maturation and driving Th1 immune response. The chain is Lymphocyte activation gene 3 protein from Homo sapiens (Human).